The chain runs to 190 residues: NAD(P)H-quinone oxidoreductase subunit I (190 aa).

4Fe-4S ferredoxin-type domains lie at 55 to 84 (GRIH…VDWT) and 95 to 124 (KHYS…MTEE). Residues Cys64, Cys67, Cys70, Cys74, Cys104, Cys107, Cys110, and Cys114 each coordinate [4Fe-4S] cluster. The tract at residues 169-190 (IEPHDLPAGSQRAGKRPEEITD) is disordered.

The protein belongs to the complex I 23 kDa subunit family. In terms of assembly, NDH-1 is composed of at least 11 different subunits. [4Fe-4S] cluster is required as a cofactor.

It localises to the cellular thylakoid membrane. The catalysed reaction is a plastoquinone + NADH + (n+1) H(+)(in) = a plastoquinol + NAD(+) + n H(+)(out). It catalyses the reaction a plastoquinone + NADPH + (n+1) H(+)(in) = a plastoquinol + NADP(+) + n H(+)(out). In terms of biological role, NDH-1 shuttles electrons from an unknown electron donor, via FMN and iron-sulfur (Fe-S) centers, to quinones in the respiratory and/or the photosynthetic chain. The immediate electron acceptor for the enzyme in this species is believed to be plastoquinone. Couples the redox reaction to proton translocation, and thus conserves the redox energy in a proton gradient. This Microcystis aeruginosa (strain NIES-843 / IAM M-2473) protein is NAD(P)H-quinone oxidoreductase subunit I.